Here is a 434-residue protein sequence, read N- to C-terminus: GTPase Obg (434 aa).

The Obg domain occupies 4–162 (ADFIDRIVIY…RKLVLELKLL (159 aa)). Residues 163 to 333 (ADVGLVGYPN…IVYKLAEIVK (171 aa)) enclose the OBG-type G domain. Residues 169–176 (GYPNVGKS), 194–198 (FTTTI), 215–218 (DIPG), 285–288 (NKID), and 314–316 (SII) each bind GTP. S176 and T196 together coordinate Mg(2+). The OCT domain occupies 355–434 (LWKELPERFN…VAQRAFEYKE (80 aa)).

It belongs to the TRAFAC class OBG-HflX-like GTPase superfamily. OBG GTPase family. As to quaternary structure, monomer. Requires Mg(2+) as cofactor.

It localises to the cytoplasm. Functionally, an essential GTPase which binds GTP, GDP and possibly (p)ppGpp with moderate affinity, with high nucleotide exchange rates and a fairly low GTP hydrolysis rate. Plays a role in control of the cell cycle, stress response, ribosome biogenesis and in those bacteria that undergo differentiation, in morphogenesis control. The polypeptide is GTPase Obg (Thermosipho africanus (strain TCF52B)).